A 212-amino-acid chain; its full sequence is MNFHPELSKISQVTNNIFLSGVFPMEQDPTVIKKLNIKYILACLDRQYVSDAHNAVLIDNPECTILYLPYDDDVSQNLWCKNKNTINLVKYTRTMEEYNCLYKQFQMYQNKPMIEIGYHFINNAVESGNNILIHCMAGISRSVSTLTYYLMKKYNIPYSQAIKYVKDRRSIVNPNDSFKLQLQGYQSKKENFIESDGKKVTDFFKYGQSRLK.

The 183-residue stretch at 9 to 191 folds into the Tyrosine-protein phosphatase domain; the sequence is KISQVTNNIF…LQGYQSKKEN (183 aa). C135 serves as the catalytic Phosphocysteine intermediate.

This sequence belongs to the protein-tyrosine phosphatase family. Non-receptor class dual specificity subfamily.

It catalyses the reaction O-phospho-L-tyrosyl-[protein] + H2O = L-tyrosyl-[protein] + phosphate. This chain is Putative tyrosine-protein phosphatase R622, found in Acanthamoeba polyphaga mimivirus (APMV).